The chain runs to 170 residues: Large ribosomal subunit protein uL22c (170 aa).

The protein belongs to the universal ribosomal protein uL22 family. Part of the 50S ribosomal subunit.

Its subcellular location is the plastid. The protein localises to the chloroplast. Functionally, this protein binds specifically to 23S rRNA. The globular domain of the protein is located near the polypeptide exit tunnel on the outside of the subunit, while an extended beta-hairpin is found that lines the wall of the exit tunnel in the center of the 70S ribosome. The sequence is that of Large ribosomal subunit protein uL22c (rpl22) from Nandina domestica (Heavenly bamboo).